The following is a 317-amino-acid chain: COP9 signalosome complex subunit 6a (317 aa).

Residues Thr30 to Val164 form the MPN domain.

This sequence belongs to the peptidase M67A family. CSN6 subfamily. Component of the CSN complex, probably composed of CSN1, CSN2, CSN3, CSN4, CSN5 (CSN5A or CSN5B), CSN6 (CSN6A or CSN6B), CSN7 and CSN8. Interacts with itself. In the complex, it probably interacts directly with CSN4 and CSN5A or CSN5B. Interacts with CSN7 (via C-terminal tail). Binds to the translation initiation factors TIF3E1.

The protein resides in the cytoplasm. It is found in the nucleus. In terms of biological role, component of the COP9 signalosome complex (CSN), a complex involved in various cellular and developmental processes such as photomorphogenesis and auxin and jasmonate responses. The CSN complex is an essential regulator of the ubiquitin (Ubl) conjugation pathway by mediating the deneddylation of the cullin subunits of SCF-type E3 ligase complexes, leading to decrease the Ubl ligase activity of SCF. It is involved in repression of photomorphogenesis in darkness by regulating the activity of COP1-containing Ubl ligase complexes. The complex is also required for degradation of PSIAA6 by regulating the activity of the Ubl ligase SCF-TIR complex. Essential for the structural integrity of the CSN holocomplex. This chain is COP9 signalosome complex subunit 6a, found in Arabidopsis thaliana (Mouse-ear cress).